A 681-amino-acid polypeptide reads, in one-letter code: DNA ligase (681 aa).

Residues 45–49 (DFDFD), 94–95 (SL), and Glu-120 each bind NAD(+). Residue Lys-122 is the N6-AMP-lysine intermediate of the active site. NAD(+) contacts are provided by Arg-143, Glu-177, Lys-289, and Lys-313. Zn(2+)-binding residues include Cys-403, Cys-406, Cys-421, and Cys-426. The BRCT domain occupies 593–681 (ADQQPFAGQS…SLKIDFKNLI (89 aa)).

It belongs to the NAD-dependent DNA ligase family. LigA subfamily. Requires Mg(2+) as cofactor. Mn(2+) serves as cofactor.

It carries out the reaction NAD(+) + (deoxyribonucleotide)n-3'-hydroxyl + 5'-phospho-(deoxyribonucleotide)m = (deoxyribonucleotide)n+m + AMP + beta-nicotinamide D-nucleotide.. In terms of biological role, DNA ligase that catalyzes the formation of phosphodiester linkages between 5'-phosphoryl and 3'-hydroxyl groups in double-stranded DNA using NAD as a coenzyme and as the energy source for the reaction. It is essential for DNA replication and repair of damaged DNA. The chain is DNA ligase from Leptospira interrogans serogroup Icterohaemorrhagiae serovar copenhageni (strain Fiocruz L1-130).